The primary structure comprises 720 residues: Pollen receptor-like kinase 1 (720 aa).

The stretch at 40–64 (LCSRGHLLIIFLLLVSPFNDAAVDV) is one LRR 1; degenerate repeat. An LRR 2; degenerate repeat occupies 123–146 (LGVLCYEGDVWGLQLENLDLSGVI). 3 LRR repeats span residues 154-179 (LHFLRTLSFMNNSFKGQCLIGISLEP), 226-248 (LPQVFELSLENNRFTGSIPHFPP), and 249-273 (NVLKVLNLSNNQLEGPIPPALSLMD). A disordered region spans residues 288-319 (LESACNSPSQEANNPDSRNSSTISGQSSTDVI). Positions 291–317 (ACNSPSQEANNPDSRNSSTISGQSSTD) are enriched in polar residues. Residues 330–350 (MLIVAVCLVVLCLLIVLILII) traverse the membrane as a helical segment. Composition is skewed to polar residues over residues 356–382 (SSSQNPQPVESNYSNNDRDQNAFTSSA) and 389–405 (LSGNSTYSNNQHSNSNK). A disordered region spans residues 356 to 409 (SSSQNPQPVESNYSNNDRDQNAFTSSAPDDHVTLSGNSTYSNNQHSNSNKAEAP). The 269-residue stretch at 434 to 702 (RASAEVLGSG…KEVVQSIQSL (269 aa)) folds into the Protein kinase domain. ATP is bound by residues 440 to 448 (LGSGNLGSS) and lysine 462.

The protein belongs to the protein kinase superfamily. Interacts with KIP1. Post-translationally, autophosphorylated. As to expression, expressed in mature pollen grains and pollen tubes, but not in style, petal, leaf, root or sepal. Very low expression in the ovary.

The protein resides in the microsome membrane. Its subcellular location is the cytoplasm. The enzyme catalyses L-seryl-[protein] + ATP = O-phospho-L-seryl-[protein] + ADP + H(+). It carries out the reaction L-threonyl-[protein] + ATP = O-phospho-L-threonyl-[protein] + ADP + H(+). It catalyses the reaction L-tyrosyl-[protein] + ATP = O-phospho-L-tyrosyl-[protein] + ADP + H(+). Dual-specificity kinase with both serine/threonine and tyrosine kinase activities. Required for postmeiotic development of microspores. Involved in embryo sac development at the late stages of megagametogenesis. Involved in the phosphorylation of KIP1. This is Pollen receptor-like kinase 1 from Petunia integrifolia (Violet-flowered petunia).